The sequence spans 101 residues: Protein Tat (101 aa).

Residues 1–24 are interaction with human CREBBP; that stretch reads MEPVDPNLEPWNHPGSQPKTACNN. Residues 1 to 48 are transactivation; it reads MEPVDPNLEPWNHPGSQPKTACNNCYCKRCSYHCLVCFQTKGLGISYG. Zn(2+)-binding residues include cysteine 22, cysteine 25, and cysteine 27. The segment at 22-37 is cysteine-rich; the sequence is CNNCYCKRCSYHCLVC. An N6-acetyllysine; by host PCAF modification is found at lysine 28. Positions 30, 33, 34, and 37 each coordinate Zn(2+). Positions 38 to 48 are core; it reads FQTKGLGISYG. Residues 47–101 are disordered; the sequence is YGRKKRRQRRSAPPSSEDHQNPIPKQPLPQTRGDQTGSEESKKKVESKTETDPFD. The Nuclear localization signal, RNA-binding (TAR), and protein transduction motif lies at 49–57; that stretch reads RKKRRQRRS. An interaction with the host capping enzyme RNGTT region spans residues 49 to 86; it reads RKKRRQRRSAPPSSEDHQNPIPKQPLPQTRGDQTGSEE. An N6-acetyllysine; by host EP300 and GCN5L2 mark is found at lysine 50 and lysine 51. 2 positions are modified to asymmetric dimethylarginine; by host PRMT6: arginine 52 and arginine 53. Lysine 71 participates in a covalent cross-link: Glycyl lysine isopeptide (Lys-Gly) (interchain with G-Cter in ubiquitin). Residues 78-80 carry the Cell attachment site motif; the sequence is RGD. Over residues 85–101 the composition is skewed to basic and acidic residues; the sequence is EESKKKVESKTETDPFD.

The protein belongs to the lentiviruses Tat family. As to quaternary structure, interacts with host CCNT1. Associates with the P-TEFb complex composed at least of Tat, P-TEFb (CDK9 and CCNT1), TAR RNA, RNA Pol II. Recruits the HATs CREBBP, TAF1/TFIID, EP300, PCAF and GCN5L2. Interacts with host KAT5/Tip60; this interaction targets the latter to degradation. Interacts with the host deacetylase SIRT1. Interacts with host capping enzyme RNGTT; this interaction stimulates RNGTT. Binds to host KDR, and to the host integrins ITGAV/ITGB3 and ITGA5/ITGB1. Interacts with host KPNB1/importin beta-1 without previous binding to KPNA1/importin alpha-1. Interacts with EIF2AK2. Interacts with host nucleosome assembly protein NAP1L1; this interaction may be required for the transport of Tat within the nucleus, since the two proteins interact at the nuclear rim. Interacts with host C1QBP/SF2P32; this interaction involves lysine-acetylated Tat. Interacts with the host chemokine receptors CCR2, CCR3 and CXCR4. Interacts with host DPP4/CD26; this interaction may trigger an anti-proliferative effect. Interacts with host LDLR. Interacts with the host extracellular matrix metalloproteinase MMP1. Interacts with host PRMT6; this interaction mediates Tat's methylation. Interacts with, and is ubiquitinated by MDM2/Hdm2. Interacts with host PSMC3 and HTATIP2. Interacts with STAB1; this interaction may overcome SATB1-mediated repression of IL2 and IL2RA (interleukin) in T cells by binding to the same domain than HDAC1. Interacts (when acetylated) with human CDK13, thereby increasing HIV-1 mRNA splicing and promoting the production of the doubly spliced HIV-1 protein Nef. Interacts with host TBP; this interaction modulates the activity of transcriptional pre-initiation complex. Interacts with host RELA. Interacts with host PLSCR1; this interaction negatively regulates Tat transactivation activity by altering its subcellular distribution. Asymmetrical arginine methylation by host PRMT6 seems to diminish the transactivation capacity of Tat and affects the interaction with host CCNT1. In terms of processing, acetylation by EP300, CREBBP, GCN5L2/GCN5 and PCAF regulates the transactivation activity of Tat. EP300-mediated acetylation of Lys-50 promotes dissociation of Tat from the TAR RNA through the competitive binding to PCAF's bromodomain. In addition, the non-acetylated Tat's N-terminus can also interact with PCAF. PCAF-mediated acetylation of Lys-28 enhances Tat's binding to CCNT1. Lys-50 is deacetylated by SIRT1. Post-translationally, polyubiquitination by host MDM2 does not target Tat to degradation, but activates its transactivation function and fosters interaction with CCNT1 and TAR RNA. Phosphorylated by EIF2AK2 on serine and threonine residues adjacent to the basic region important for TAR RNA binding and function. Phosphorylation of Tat by EIF2AK2 is dependent on the prior activation of EIF2AK2 by dsRNA.

The protein localises to the host nucleus. It localises to the host nucleolus. It is found in the host cytoplasm. Its subcellular location is the secreted. Its function is as follows. Transcriptional activator that increases RNA Pol II processivity, thereby increasing the level of full-length viral transcripts. Recognizes a hairpin structure at the 5'-LTR of the nascent viral mRNAs referred to as the transactivation responsive RNA element (TAR) and recruits the cyclin T1-CDK9 complex (P-TEFb complex) that will in turn hyperphosphorylate the RNA polymerase II to allow efficient elongation. The CDK9 component of P-TEFb and other Tat-activated kinases hyperphosphorylate the C-terminus of RNA Pol II that becomes stabilized and much more processive. Other factors such as HTATSF1/Tat-SF1, SUPT5H/SPT5, and HTATIP2 are also important for Tat's function. Besides its effect on RNA Pol II processivity, Tat induces chromatin remodeling of proviral genes by recruiting the histone acetyltransferases (HATs) CREBBP, EP300 and PCAF to the chromatin. This also contributes to the increase in proviral transcription rate, especially when the provirus integrates in transcriptionally silent region of the host genome. To ensure maximal activation of the LTR, Tat mediates nuclear translocation of NF-kappa-B by interacting with host RELA. Through its interaction with host TBP, Tat may also modulate transcription initiation. Tat can reactivate a latently infected cell by penetrating in it and transactivating its LTR promoter. In the cytoplasm, Tat is thought to act as a translational activator of HIV-1 mRNAs. Functionally, extracellular circulating Tat can be endocytosed by surrounding uninfected cells via the binding to several surface receptors such as CD26, CXCR4, heparan sulfate proteoglycans (HSPG) or LDLR. Neurons are rarely infected, but they internalize Tat via their LDLR. Through its interaction with nuclear HATs, Tat is potentially able to control the acetylation-dependent cellular gene expression. Modulates the expression of many cellular genes involved in cell survival, proliferation or in coding for cytokines or cytokine receptors. Tat plays a role in T-cell and neurons apoptosis. Tat induced neurotoxicity and apoptosis probably contribute to neuroAIDS. Circulating Tat also acts as a chemokine-like and/or growth factor-like molecule that binds to specific receptors on the surface of the cells, affecting many cellular pathways. In the vascular system, Tat binds to ITGAV/ITGB3 and ITGA5/ITGB1 integrins dimers at the surface of endothelial cells and competes with bFGF for heparin-binding sites, leading to an excess of soluble bFGF. The polypeptide is Protein Tat (Human immunodeficiency virus type 1 group M subtype C (isolate 92BR025) (HIV-1)).